The following is a 369-amino-acid chain: MRSLLRWMGVLLLCGLCAAPAQAERIRDLASFAGVRENQLVGYGLVVGLDGTGDQTTQTPFTGQTLINMLSQLGVSIPEGTNMQLRNVAAVMVTAQLPPFARQGQEMDVTVSSMGNADSLRGGTLLMTPLRGVDGNVYAMAQGNLLIGGVGAQQAGSSVQVNHTAAGRIPGGATVEQEVALQLGRADGTLDLYLNESDFTTAQRVVEAINRDFGSPVAAAMDGRLIRLNAPSDSNSRVNFMARIQNLDVTPNQGPAKVIVNSRTGSVVLNREVTLDRAAVAHGNLSVTIDSNPQVSQPNPLGEGETVVVPDADISIQQEGGALQMVNTSADLMDVVNALNALGASPQDLMSILQALKSAGALNAELEII.

The N-terminal stretch at M1–A23 is a signal peptide.

Belongs to the FlgI family. In terms of assembly, the basal body constitutes a major portion of the flagellar organelle and consists of four rings (L,P,S, and M) mounted on a central rod.

It localises to the periplasm. It is found in the bacterial flagellum basal body. Its function is as follows. Assembles around the rod to form the L-ring and probably protects the motor/basal body from shearing forces during rotation. This chain is Flagellar P-ring protein, found in Chromohalobacter salexigens (strain ATCC BAA-138 / DSM 3043 / CIP 106854 / NCIMB 13768 / 1H11).